The chain runs to 372 residues: MNALHALQTLAVSIRSVRKVYGDPHSGPVALKNIDLDIRDNEFFTLLGPSGCGKTTLLRMIAGFEFPTQGEILLYGENIADRPPFERPVNTVFQHYALFPHMTLAENLAFGLESRPMGQVLSKAQIDERVREMLALVQMERFAARKPNQLSGGQQQRIALARALAPHPKVLLLDEPLSALDLKLRQAMREELKAIQAKTGITFIFVTHDQEEALTLSDRIAVLSEGEVQQVGRPEEIYEQPRNRFVADFIGETNFIPAMVSRVEAGLAWFSGPAGQALPAQPCTTAKVGQQVTLSVRPERLHLRGDASQGALACRIEALIYLGTDLQYQVSLGDGTRLTVRTPNSLEHHPRLSVGSSAGLLFERGSASVLLD.

The region spanning Val12–Ile250 is the ABC transporter domain. Gly48–Thr55 is a binding site for ATP.

This sequence belongs to the ABC transporter superfamily. Spermidine/putrescine importer (TC 3.A.1.11.1) family. As to quaternary structure, the complex is composed of two ATP-binding proteins (PotA), two transmembrane proteins (PotB and PotC) and a solute-binding protein (PotD).

Its subcellular location is the cell inner membrane. It carries out the reaction ATP + H2O + polyamine-[polyamine-binding protein]Side 1 = ADP + phosphate + polyamineSide 2 + [polyamine-binding protein]Side 1.. Functionally, part of the ABC transporter complex PotABCD involved in spermidine/putrescine import. Responsible for energy coupling to the transport system. The protein is Spermidine/putrescine import ATP-binding protein PotA of Pseudomonas fluorescens (strain ATCC BAA-477 / NRRL B-23932 / Pf-5).